A 226-amino-acid polypeptide reads, in one-letter code: Putative ankyrin repeat protein RF_0939 (226 aa).

4 ANK repeats span residues 56–86 (VSTT…NVNM), 91–120 (FKDT…AVNG), 125–154 (LLGP…AVDQ), and 157–194 (SGET…DTNA).

The chain is Putative ankyrin repeat protein RF_0939 from Rickettsia felis (strain ATCC VR-1525 / URRWXCal2) (Rickettsia azadi).